A 244-amino-acid polypeptide reads, in one-letter code: 1-(5-phosphoribosyl)-5-[(5-phosphoribosylamino)methylideneamino] imidazole-4-carboxamide isomerase (244 aa).

Residue D13 is the Proton acceptor of the active site. Residue D132 is the Proton donor of the active site.

This sequence belongs to the HisA/HisF family.

Its subcellular location is the cytoplasm. The catalysed reaction is 1-(5-phospho-beta-D-ribosyl)-5-[(5-phospho-beta-D-ribosylamino)methylideneamino]imidazole-4-carboxamide = 5-[(5-phospho-1-deoxy-D-ribulos-1-ylimino)methylamino]-1-(5-phospho-beta-D-ribosyl)imidazole-4-carboxamide. It functions in the pathway amino-acid biosynthesis; L-histidine biosynthesis; L-histidine from 5-phospho-alpha-D-ribose 1-diphosphate: step 4/9. This Renibacterium salmoninarum (strain ATCC 33209 / DSM 20767 / JCM 11484 / NBRC 15589 / NCIMB 2235) protein is 1-(5-phosphoribosyl)-5-[(5-phosphoribosylamino)methylideneamino] imidazole-4-carboxamide isomerase.